Here is a 426-residue protein sequence, read N- to C-terminus: Glutamyl-tRNA reductase (426 aa).

Substrate contacts are provided by residues 52-55, serine 110, 115-117, and glutamine 121; these read TCNR and EYE. Cysteine 53 acts as the Nucleophile in catalysis. Residue 190–195 participates in NADP(+) binding; the sequence is GAGEMA.

This sequence belongs to the glutamyl-tRNA reductase family. In terms of assembly, homodimer.

It carries out the reaction (S)-4-amino-5-oxopentanoate + tRNA(Glu) + NADP(+) = L-glutamyl-tRNA(Glu) + NADPH + H(+). Its pathway is porphyrin-containing compound metabolism; protoporphyrin-IX biosynthesis; 5-aminolevulinate from L-glutamyl-tRNA(Glu): step 1/2. Functionally, catalyzes the NADPH-dependent reduction of glutamyl-tRNA(Glu) to glutamate 1-semialdehyde (GSA). The protein is Glutamyl-tRNA reductase of Saccharolobus solfataricus (strain ATCC 35092 / DSM 1617 / JCM 11322 / P2) (Sulfolobus solfataricus).